Here is a 52-residue protein sequence, read N- to C-terminus: Protein RepA (52 aa).

The segment at residues 20–40 is a DNA-binding region (H-T-H motif); sequence KLEELAQKYGMTKSGLVNFLV.

This sequence belongs to the transcriptional regulatory CopG/NikR family. Homodimer.

Functionally, regulates the plasmid copy number. RepA binds to the repAB promoter thus controlling the synthesis of the plasmid replication initiator protein RepB. The polypeptide is Protein RepA (repA) (Lactiplantibacillus plantarum (Lactobacillus plantarum)).